A 166-amino-acid chain; its full sequence is MKYTSYILAFQLCIILGSSSCYSQDTVNKEIEDLKGYFNASNSNVSDGGSLFLDILDKWKEESDKKVIQSQIVSFYFKLFEHLKDNKIIQRSMDTIKGDLFAKFFNSSTNKLQDFLKVSQVQVNDLKIQRKAVSELKKVMNDLLPHSTLRKRKRSQSSIRGRRASK.

Residues 1–23 (MKYTSYILAFQLCIILGSSSCYS) form the signal peptide. Gln24 carries the pyrrolidone carboxylic acid modification. Asn39, Asn44, and Asn106 each carry an N-linked (GlcNAc...) asparagine glycan.

The protein belongs to the type II (or gamma) interferon family. Homodimer. In terms of tissue distribution, released primarily from activated T lymphocytes.

The protein resides in the secreted. Produced by lymphocytes activated by specific antigens or mitogens. IFN-gamma, in addition to having antiviral activity, has important immunoregulatory functions. It is a potent activator of macrophages, it has antiproliferative effects on transformed cells and it can potentiate the antiviral and antitumor effects of the type I interferons. The chain is Interferon gamma (IFNG) from Marmota monax (Woodchuck).